Reading from the N-terminus, the 118-residue chain is Large ribosomal subunit protein uL18 (118 aa).

Positions 1 to 24 (MITKPDKNKIRQKRHRRVRGKLSG) are disordered. A compositionally biased stretch (basic residues) spans 10-20 (IRQKRHRRVRG).

The protein belongs to the universal ribosomal protein uL18 family. As to quaternary structure, part of the 50S ribosomal subunit; part of the 5S rRNA/L5/L18/L25 subcomplex. Contacts the 5S and 23S rRNAs.

Its function is as follows. This is one of the proteins that bind and probably mediate the attachment of the 5S RNA into the large ribosomal subunit, where it forms part of the central protuberance. This is Large ribosomal subunit protein uL18 from Streptococcus sanguinis (strain SK36).